The sequence spans 204 residues: Large ribosomal subunit protein eL15 (204 aa).

Belongs to the eukaryotic ribosomal protein eL15 family. Component of the large ribosomal subunit.

The protein resides in the cytoplasm. Its function is as follows. Component of the large ribosomal subunit. The ribosome is a large ribonucleoprotein complex responsible for the synthesis of proteins in the cell. This is Large ribosomal subunit protein eL15 (rpl15) from Paramisgurnus dabryanus.